Consider the following 603-residue polypeptide: Podocalyxin-like protein 2 (603 aa).

Positions 1–28 (MARPLRAARLPPPLLLLLAAGASLGAYA) are cleaved as a signal peptide. Residues 29-499 (VGVDEPGPEG…ATQVRSDYGT (471 aa)) are Extracellular-facing. Positions 53–92 (FEPLDSEEPSEAMGLDAGLAPGSGFPSEDSEESRLLQPPQ) are disordered. O-linked (Xyl...) (chondroitin sulfate) serine glycosylation occurs at serine 75. Tyrosine 93 is subject to Sulfotyrosine. N-linked (GlcNAc...) asparagine glycosylation occurs at asparagine 101. Position 113 is a sulfotyrosine (tyrosine 113). Residues 124-368 (SMEDPGQAPD…LEGQAAEAHS (245 aa)) form a disordered region. Residues 156–187 (QEEEEEEEEEEEEREEEEREKEAEEEEEEEEL) are compositionally biased toward acidic residues. The span at 196–216 (ATAQAHAPSPSTSSSTSSQSP) shows a compositional bias: low complexity. Composition is skewed to polar residues over residues 240 to 266 (VKPT…QESG), 302 to 314 (ALPS…TVPP), and 339 to 349 (DTESTPSSATW). Asparagine 260 carries an N-linked (GlcNAc...) asparagine glycan. N-linked (GlcNAc...) asparagine glycosylation is present at asparagine 394. The chain crosses the membrane as a helical span at residues 500-520 (LFVVLVIIGVICFIIIVLGLL). Over 521–603 (YNCWQRRMPK…SDVFEEDTHL (83 aa)) the chain is Cytoplasmic. Positions 558 to 570 (DSQSEMQEKQPSL) are enriched in polar residues. The disordered stretch occupies residues 558-603 (DSQSEMQEKQPSLNGGAINGPSSWSALMGSKRDPEDSDVFEEDTHL). Residues serine 569 and serine 594 each carry the phosphoserine modification. A compositionally biased stretch (acidic residues) spans 592-603 (EDSDVFEEDTHL).

This sequence belongs to the podocalyxin family. Homodimer; disulfide-linked. Interacts with SELL, SELE and SELP. In terms of processing, glycosylated; contains chondroitin sulfate. Displays sialylated O-linked oligosaccharides. Sulfation is necessary for interaction with SELL. Sialylated O-linked oligosaccharides are necessary for interaction with SELL, SELE and SELP.

The protein localises to the membrane. Its function is as follows. Acts as a ligand for vascular selectins. Mediates rapid rolling of leukocytes over vascular surfaces through high affinity divalent cation-dependent interactions with E-, P- and L-selectins. In Mus musculus (Mouse), this protein is Podocalyxin-like protein 2 (Podxl2).